Reading from the N-terminus, the 122-residue chain is Large ribosomal subunit protein uL14 (122 aa).

It belongs to the universal ribosomal protein uL14 family. As to quaternary structure, part of the 50S ribosomal subunit. Forms a cluster with proteins L3 and L19. In the 70S ribosome, L14 and L19 interact and together make contacts with the 16S rRNA in bridges B5 and B8.

Binds to 23S rRNA. Forms part of two intersubunit bridges in the 70S ribosome. This chain is Large ribosomal subunit protein uL14, found in Mesomycoplasma hyopneumoniae (strain 232) (Mycoplasma hyopneumoniae).